Reading from the N-terminus, the 470-residue chain is 5-hydroxytryptamine receptor 2A (470 aa).

The interval 1–23 (MDVLFEDNAPLSPTTSSLMPSNG) is disordered. Topologically, residues 1–80 (MDVLFEDNAP…LQEKNWSALL (80 aa)) are extracellular. Over residues 10–21 (PLSPTTSSLMPS) the composition is skewed to low complexity. Residues N38, N44, N51, and N54 are each glycosylated (N-linked (GlcNAc...) asparagine). A helical membrane pass occupies residues 81 to 97 (TAVVIILTIAGNILVIM). At 98-111 (AVSLEKKLQNATNY) the chain is on the cytoplasmic side. The helical transmembrane segment at 112 to 137 (FLMSLAIADMLLGFLVMPVSMLTILY) threads the bilayer. Residues 138–146 (GYRWPLPSK) are Extracellular-facing. A helical membrane pass occupies residues 147–171 (LCAVWIYLDVLFSTASIMHLCAISL). C148 and C227 are disulfide-bonded. D155 serves as a coordination point for serotonin. A DRY motif; important for ligand-induced conformation changes motif is present at residues 172 to 174 (DRY). The Cytoplasmic portion of the chain corresponds to 172 to 191 (DRYVAIQNPIHHSRFNSRTK). A helical transmembrane segment spans residues 192-215 (AFLKIIAVWTISVGISMPIPVFGL). Residues 216-232 (QDDSKVFKEGSCLLADD) lie on the Extracellular side of the membrane. The chain crosses the membrane as a helical span at residues 233 to 258 (NFVLIGSFVSFFIPLTIMVITYFLTI). The Cytoplasmic portion of the chain corresponds to 259–321 (KSLQKEATLC…QSISNEQKAC (63 aa)). The residue at position 280 (S280) is a Phosphoserine. Residues 322 to 347 (KVLGIVFFLFVVMWCPFFITNIMAVI) traverse the membrane as a helical segment. N342 provides a ligand contact to serotonin. A disulfide bridge connects residues C348 and C352. Over 348-355 (CKESCNED) the chain is Extracellular. The chain crosses the membrane as a helical span at residues 356 to 381 (IIGALLNVFVWIGYLSSAVNPLVYTL). The NPxxY motif; important for ligand-induced conformation changes and signaling motif lies at 375–379 (NPLVY). Residues 382-470 (FNKTYRSAFS…NTVNEKVSCV (89 aa)) lie on the Cytoplasmic side of the membrane. The short motif at 468-470 (SCV) is the PDZ-binding element.

It belongs to the G-protein coupled receptor 1 family. Interacts (via C-terminus) with MPDZ and PATJ. May interact (via C-terminus) with MPP3, PRDX6, DLG4, DLG1, CASK, APBA1 and MAGI2. Interacts with GRM2 and DRD2; this may affect signaling. Ubiquitous.

The protein resides in the cell membrane. Its subcellular location is the cell projection. It localises to the dendrite. The protein localises to the axon. It is found in the cytoplasmic vesicle. The protein resides in the membrane. Its subcellular location is the caveola. It localises to the presynapse. With respect to regulation, G-protein coupled receptor activity is regulated by lipids: oleamide increases HTR2A-mediated activity. Functionally, G-protein coupled receptor for 5-hydroxytryptamine (serotonin). Also functions as a receptor for various drugs and psychoactive substances, including mescaline, psilocybin, 1-(2,5-dimethoxy-4-iodophenyl)-2-aminopropane (DOI) and lysergic acid diethylamide (LSD). Ligand binding causes a conformation change that triggers signaling via guanine nucleotide-binding proteins (G proteins) and modulates the activity of downstream effectors. HTR2A is coupled to G(q)/G(11) G alpha proteins and activates phospholipase C-beta, releasing diacylglycerol (DAG) and inositol 1,4,5-trisphosphate (IP3) second messengers that modulate the activity of phosphatidylinositol 3-kinase and promote the release of Ca(2+) ions from intracellular stores, respectively. Beta-arrestin family members inhibit signaling via G proteins and mediate activation of alternative signaling pathways. Affects neural activity, perception, cognition and mood. Plays a role in the regulation of behavior, including responses to anxiogenic situations and psychoactive substances. Plays a role in intestinal smooth muscle contraction, and may play a role in arterial vasoconstriction. The protein is 5-hydroxytryptamine receptor 2A (HTR2A) of Canis lupus familiaris (Dog).